We begin with the raw amino-acid sequence, 78 residues long: Small ribosomal subunit protein uS19m (78 aa).

The protein belongs to the universal ribosomal protein uS19 family.

The protein localises to the mitochondrion. The sequence is that of Small ribosomal subunit protein uS19m (RPS19) from Acanthamoeba castellanii (Amoeba).